The chain runs to 1011 residues: Translation initiation factor IF-2 (1011 aa).

Over residues 49 to 77 (YIHEHGTEESPRRRSAGEDEFKPKIDLSK) the composition is skewed to basic and acidic residues. Disordered regions lie at residues 49 to 152 (YIHE…RFIT) and 187 to 407 (AAPA…LSLS). Positions 93–104 (APPPPPPPPPRP) are enriched in pro residues. A compositionally biased stretch (low complexity) spans 105-115 (AVKAPSPVSQE). Residues 116–126 (PRPPAVPPAPQ) are compositionally biased toward pro residues. Composition is skewed to low complexity over residues 187-212 (AAPA…KAPV) and 228-242 (TAKP…AATP). Pro residues-rich tracts occupy residues 243-252 (APTPGRPLPG) and 276-290 (SAPP…PPPQ). A compositionally biased stretch (gly residues) spans 316–329 (GPGGGSGGPGGFQR). A compositionally biased stretch (low complexity) spans 361 to 380 (LAPPGAPANKPAGRPAPARR). Positions 502–678 (VRPPVVTIMG…CLVADLGDLK (177 aa)) constitute a tr-type G domain. A G1 region spans residues 511-518 (GHVDHGKT). 511–518 (GHVDHGKT) provides a ligand contact to GTP. A G2 region spans residues 536–540 (GITQH). Positions 564–567 (DTPG) are G3. Residues 564–568 (DTPGH) and 618–621 (NKID) each bind GTP. Residues 618-621 (NKID) are G4. The G5 stretch occupies residues 654–656 (SAK).

Belongs to the TRAFAC class translation factor GTPase superfamily. Classic translation factor GTPase family. IF-2 subfamily.

It is found in the cytoplasm. One of the essential components for the initiation of protein synthesis. Protects formylmethionyl-tRNA from spontaneous hydrolysis and promotes its binding to the 30S ribosomal subunits. Also involved in the hydrolysis of GTP during the formation of the 70S ribosomal complex. This is Translation initiation factor IF-2 from Koribacter versatilis (strain Ellin345).